The following is a 150-amino-acid chain: KLVVVFGATGAQGGSVARTLLEDGTFRVRVVTRNPEQKLLADLAKRLGLHYVVYSGLENIKKLAAGHFDGKGEVEEYFRKPEEYIGQNVGLSTCRTTPEEYEKLGFQGAQDLANMFRFYALKPDRNIDLTLRAQTLDQWLEQHKGDFAHL.

NADP(+) is bound by residues 7–12 (GATGAQ), 33–37 (RNPEQ), and Lys71.

It belongs to the NmrA-type oxidoreductase family. In terms of assembly, homodimer. Interacts with ASS1. Interaction is enhanced by low NADPH/NADP(+) ratios, which results in inhibition of ASS1 activity.

It localises to the cytoplasm. Its subcellular location is the perinuclear region. The protein resides in the nucleus. Redox sensor protein. Undergoes restructuring and subcellular redistribution in response to changes in intracellular NADPH/NADP(+) levels. At low NADPH concentrations the protein is found mainly as a monomer, and binds argininosuccinate synthase (ASS1), the enzyme involved in nitric oxide synthesis. Association with ASS1 impairs its activity and reduces the production of nitric oxide, which subsecuently prevents apoptosis. Under normal NADPH concentrations, the protein is found as a dimer and hides the binding site for ASS1. The homodimer binds one molecule of NADPH. Has higher affinity for NADPH than for NADP(+). Binding to NADPH is necessary to form a stable dimer. The chain is NmrA-like family domain-containing protein 1 from Rattus norvegicus (Rat).